The following is an 88-amino-acid chain: U2-ctenitoxin-Pn1a (88 aa).

The signal sequence occupies residues 1 to 17; that stretch reads MKVAILILSILVLAVAS. The propeptide occupies 18-34; that stretch reads ETIEEYRDDFAVEELER. 5 disulfide bridges follow: Cys37-Cys51, Cys44-Cys57, Cys48-Cys86, Cys50-Cys71, and Cys59-Cys69. Lys88 is a propeptide.

As to expression, expressed by the venom gland.

The protein localises to the secreted. Its function is as follows. Inhibits voltage-gated sodium channels (Nav). Causes scratching, lacrimation, hypersalivation, sweating and agitation followed by spastic paralysis of the anterior and posterior extremities and death at dose levels of 1.62 mg/mouse. Insecticidal to the larval and adult forms of the house fly. The protein is U2-ctenitoxin-Pn1a of Phoneutria nigriventer (Brazilian armed spider).